The sequence spans 801 residues: Phenylalanine--tRNA ligase beta subunit (801 aa).

A tRNA-binding domain is found at 39-153 (ADGLSKLVVG…EEAVPGDAIF (115 aa)). The 76-residue stretch at 406–481 (TEPVEVSTSL…RIYGYDKLPT (76 aa)) folds into the B5 domain. Positions 459, 465, 468, and 469 each coordinate Mg(2+). An FDX-ACB domain is found at 708 to 801 (TKFPAMTRDV…LTEQVGAEVR (94 aa)).

Belongs to the phenylalanyl-tRNA synthetase beta subunit family. Type 1 subfamily. Tetramer of two alpha and two beta subunits. Requires Mg(2+) as cofactor.

It is found in the cytoplasm. The catalysed reaction is tRNA(Phe) + L-phenylalanine + ATP = L-phenylalanyl-tRNA(Phe) + AMP + diphosphate + H(+). The protein is Phenylalanine--tRNA ligase beta subunit of Streptococcus pyogenes serotype M1.